We begin with the raw amino-acid sequence, 284 residues long: Bifunctional protein FolD (284 aa).

Residues 165–167 (GRS), serine 190, and valine 231 each bind NADP(+).

It belongs to the tetrahydrofolate dehydrogenase/cyclohydrolase family. In terms of assembly, homodimer.

The enzyme catalyses (6R)-5,10-methylene-5,6,7,8-tetrahydrofolate + NADP(+) = (6R)-5,10-methenyltetrahydrofolate + NADPH. It carries out the reaction (6R)-5,10-methenyltetrahydrofolate + H2O = (6R)-10-formyltetrahydrofolate + H(+). It participates in one-carbon metabolism; tetrahydrofolate interconversion. Functionally, catalyzes the oxidation of 5,10-methylenetetrahydrofolate to 5,10-methenyltetrahydrofolate and then the hydrolysis of 5,10-methenyltetrahydrofolate to 10-formyltetrahydrofolate. The protein is Bifunctional protein FolD of Geobacillus kaustophilus (strain HTA426).